The primary structure comprises 252 residues: Ubiquinone biosynthesis O-methyltransferase (252 aa).

Positions 51, 70, 91, and 136 each coordinate S-adenosyl-L-methionine.

Belongs to the methyltransferase superfamily. UbiG/COQ3 family.

It catalyses the reaction a 3-demethylubiquinol + S-adenosyl-L-methionine = a ubiquinol + S-adenosyl-L-homocysteine + H(+). The enzyme catalyses a 3-(all-trans-polyprenyl)benzene-1,2-diol + S-adenosyl-L-methionine = a 2-methoxy-6-(all-trans-polyprenyl)phenol + S-adenosyl-L-homocysteine + H(+). Its pathway is cofactor biosynthesis; ubiquinone biosynthesis. Functionally, O-methyltransferase that catalyzes the 2 O-methylation steps in the ubiquinone biosynthetic pathway. In Albidiferax ferrireducens (strain ATCC BAA-621 / DSM 15236 / T118) (Rhodoferax ferrireducens), this protein is Ubiquinone biosynthesis O-methyltransferase.